A 579-amino-acid chain; its full sequence is MTARYGFGSISFPNKCGIFLSTTKNFIAPNFPIHYWTAPAFELRGRMNPDLEKNTLTLKNAAAVAALDNLRGETITLPTEIDRRLKPLEEQLTRMAKVLDSLETAAAEAEEADAQSEECTRTEIIRNESIHPEVQIAKNDAPLQYDTNFQVDFITLVYLGRARGNNSPGIVFGPWYRTLQERLVLDRPVAARGVDCKDGRISRTFMNTTVTCLQSAGRMYVGDRAYSAFECAVLCLYLMYRTSNSVHEPQVSSFGNLIEHLPEYTETFVNYMTTHENKNSYQFCYDRLPRDQFHARGGRYDQGALTSHSVMDALIRLQVLPPAPGQFNPGVNDIIDRNHTAYVDKIQQAAAAYLERAQNVFLMEDQTLLRLTIDTITALLLLRRLLWNGNVYGDKLKNNFQLGLIVSEATGTPTNNVILRGATGFDGKFKSGNNNFQFLCERYIAPLYTLNRTTELTEMFPGLVALCLDAHTQLSRGSLGRTVIDISSGQYQDRLISLIALELEHRRQNVTSLPIAAVVSIHDSVMLQYERGLGMLMHQPRVRAALEESRRLAQFNVNSDYDLLYFVCLGVIPQFASTP.

The interaction with major capsid protein/MCP stretch occupies residues 1–50; sequence MTARYGFGSISFPNKCGIFLSTTKNFIAPNFPIHYWTAPAFELRGRMNPD.

It belongs to the herpesviridae CVC2 protein family. Heterodimerizes with CVC1. Interacts with major capsid protein/MCP and triplex capsid protein 1/TRX1 at the pentamer vertices. Interacts with the large tegument protein/LTP.

Its subcellular location is the virion. It is found in the host nucleus. Its function is as follows. Capsid vertex-specific component that plays a role during viral DNA encapsidation, assuring correct genome cleavage and presumably stabilizing capsids that contain full-length viral genomes. Participates in the interaction between the capsid and the tegument through interaction with the large tegument protein/LTP. This is Capsid vertex component 2 from Homo sapiens (Human).